Consider the following 499-residue polypeptide: Glycerol kinase (499 aa).

Position 13 (Thr13) interacts with ADP. 3 residues coordinate ATP: Thr13, Thr14, and Ser15. Thr13 contributes to the sn-glycerol 3-phosphate binding site. Residue Arg17 coordinates ADP. Sn-glycerol 3-phosphate-binding residues include Arg83, Glu84, Tyr135, and Asp244. Residues Arg83, Glu84, Tyr135, Asp244, and Gln245 each contribute to the glycerol site. ADP is bound by residues Thr266 and Gly309. ATP-binding residues include Thr266, Gly309, Gln313, and Gly410. The ADP site is built by Gly410 and Asn414.

It belongs to the FGGY kinase family. In terms of assembly, homotetramer and homodimer (in equilibrium).

It catalyses the reaction glycerol + ATP = sn-glycerol 3-phosphate + ADP + H(+). Its pathway is polyol metabolism; glycerol degradation via glycerol kinase pathway; sn-glycerol 3-phosphate from glycerol: step 1/1. With respect to regulation, activated by phosphorylation and inhibited by fructose 1,6-bisphosphate (FBP). Functionally, key enzyme in the regulation of glycerol uptake and metabolism. Catalyzes the phosphorylation of glycerol to yield sn-glycerol 3-phosphate. The polypeptide is Glycerol kinase (Brevibacillus brevis (strain 47 / JCM 6285 / NBRC 100599)).